Reading from the N-terminus, the 299-residue chain is Pyridoxal 5'-phosphate synthase subunit PdxS (299 aa).

Asp24 contacts D-ribose 5-phosphate. Lys81 (schiff-base intermediate with D-ribose 5-phosphate) is an active-site residue. Residue Gly153 participates in D-ribose 5-phosphate binding. Residue Arg165 coordinates D-glyceraldehyde 3-phosphate. Residues Gly219 and 240-241 (GS) contribute to the D-ribose 5-phosphate site.

It belongs to the PdxS/SNZ family. In terms of assembly, in the presence of PdxT, forms a dodecamer of heterodimers.

The catalysed reaction is aldehydo-D-ribose 5-phosphate + D-glyceraldehyde 3-phosphate + L-glutamine = pyridoxal 5'-phosphate + L-glutamate + phosphate + 3 H2O + H(+). Its pathway is cofactor biosynthesis; pyridoxal 5'-phosphate biosynthesis. Catalyzes the formation of pyridoxal 5'-phosphate from ribose 5-phosphate (RBP), glyceraldehyde 3-phosphate (G3P) and ammonia. The ammonia is provided by the PdxT subunit. Can also use ribulose 5-phosphate and dihydroxyacetone phosphate as substrates, resulting from enzyme-catalyzed isomerization of RBP and G3P, respectively. The protein is Pyridoxal 5'-phosphate synthase subunit PdxS of Methanococcus maripaludis (strain DSM 14266 / JCM 13030 / NBRC 101832 / S2 / LL).